The sequence spans 1497 residues: MIFSQGASPLKGEFSRIKFSIASPESILAHSRGEVLKPETINYRTFKPERDGLMCEKIFGPTKDWECYCGKYKRVRYKGIICDRCGVEVTTKSVRRERMGHIALAVPVVHTWFFRSVPSKIGALLDLSTKELERIIYYEVYVVINPGEPGEKQGIKKLDRLTEEQYFQIITEYEDNQDLEDSDPDKFVAKMGGEAIHMLLKNIDLDASAIHLRKVLKESNSEQKRADALKRLKVVEAFRKSYEPHKKTRKKPQGLFPEDELPEPYVYEGNKPEYMVMEVVPVIPPELRPLVPLEGGRFATSDLNDLYRRVIIRNNRLKKLIDIRAPEVILRNEKRMLQEAVDALFDNSRKANAVKTGESNRPLKSLSDALKGKQGRFRQNLLGKRVDYSGRSVIVVGPELKLHECGLPKSMAIELFQPFVIRRLVDRGIAKSVKSAKKLIDKKDPIVWDVLEKVIDGRPVLLNRAPTLHRLGIQAFQPLLIEGKAIQIHPLVCTAFNADFDGDQMAVHIPLSQEAQLEASLLMLSSHNLILPQSGKPVTVPSQDMVLGMYYLTKSRSRDLGEGQIFYSPQDVLIAYNEERVGLHAQIFVQYDGEIDQKFDSLRVLDTMTDLTAEKSAWLKAQIEKKCILLTTVGRVIFNQNVPKEIGFINRVIDKKVAKELIGRLSSEVGNVETAKFLDNIKEVGFHYAMKGGLSVGLSDAIVPETKARHIKSAQRDSTKVVKEYNRGTLTDNERYNQIVDVWQKTSNIVAEESYQKLKKDRDGFNPLYMMLDSGARGSREQVRQLTGMRGLIARPQKSMSGQPGEIIENPIISNLKEGLTVLEYFISTHGARKGLSDTSLKTADAGYLTRRLHDVAQDVIVTIDDCGTTRGLYVHRNIEEETSGQIKFREKIKGRVAARDIIDTLNNNVIVNSGEIITEELAELIQETAGVEEAEIRSVLTCESKIGICSKCYGTNLSVHELVEIGEAVGVIAAQSIGEPGTQLTLRTFHQGGTAQGGISETETKAFYDGQIQFEDIKTVEHTAINEDGVADLRIIVIQKNGKINIADPESGKILKRYLVPHGAHLHCKNGSLVKKDQVMFSSEPNSTQIIAEIPGIIKFADIEKGITYKEEVDPQTGFSQHTIINWRSKLRATETREPRLMIIDASGEVRKTYPVPIKSNLYVEDGQKVEPGDIMAKVPRNLDRVGGDITAGLPKVTELFEARIPTDPAIVTEIDGYVSFGSQRRSSKEIKVKNDFGEEKVYYVQVGKHVLANEGDEVKAGDPLTDGAVSPQDILRIQGPNAVQQYLVNEIQKVYQINAGVEINDKHLEVIVRQMLQKVRVEEPGDTDLLPGDLIDRSAFVESNQSVAEKVRITEKGDAPARIQDSQLHKVRDITKLNRELRKNSKNMIAFEPALQATSHPVLLGITSAALQTESVISAASFQETTKVLTDAAVAGKVDYLAGLKENVIVGKLIPAGTGLKRYKAIKLTGEGQESNATERVVEEPATREGFANER.

Zn(2+) is bound by residues Cys-67, Cys-69, Cys-82, and Cys-85. Residues Asp-499, Asp-501, and Asp-503 each coordinate Mg(2+). Zn(2+) is bound by residues Cys-867, Cys-943, Cys-950, and Cys-953. Residues 1476-1497 (ESNATERVVEEPATREGFANER) are disordered. Over residues 1482-1497 (RVVEEPATREGFANER) the composition is skewed to basic and acidic residues.

The protein belongs to the RNA polymerase beta' chain family. In terms of assembly, the RNAP catalytic core consists of 2 alpha, 1 beta, 1 beta' and 1 omega subunit. When a sigma factor is associated with the core the holoenzyme is formed, which can initiate transcription. It depends on Mg(2+) as a cofactor. Requires Zn(2+) as cofactor.

The catalysed reaction is RNA(n) + a ribonucleoside 5'-triphosphate = RNA(n+1) + diphosphate. Functionally, DNA-dependent RNA polymerase catalyzes the transcription of DNA into RNA using the four ribonucleoside triphosphates as substrates. The polypeptide is DNA-directed RNA polymerase subunit beta' (Pelodictyon phaeoclathratiforme (strain DSM 5477 / BU-1)).